Consider the following 427-residue polypeptide: Glutamyl-tRNA reductase (427 aa).

Residues 49-52 (TCNR), serine 101, 106-108 (EPQ), and glutamine 112 each bind substrate. Cysteine 50 (nucleophile) is an active-site residue. Residue 181–186 (GAGETI) participates in NADP(+) binding. The tract at residues 407-427 (FPATPGYRHPPVRPDDADPAP) is disordered. A compositionally biased stretch (basic and acidic residues) spans 418–427 (VRPDDADPAP).

It belongs to the glutamyl-tRNA reductase family. In terms of assembly, homodimer.

The enzyme catalyses (S)-4-amino-5-oxopentanoate + tRNA(Glu) + NADP(+) = L-glutamyl-tRNA(Glu) + NADPH + H(+). Its pathway is porphyrin-containing compound metabolism; protoporphyrin-IX biosynthesis; 5-aminolevulinate from L-glutamyl-tRNA(Glu): step 1/2. Catalyzes the NADPH-dependent reduction of glutamyl-tRNA(Glu) to glutamate 1-semialdehyde (GSA). The protein is Glutamyl-tRNA reductase of Stenotrophomonas maltophilia (strain K279a).